A 150-amino-acid polypeptide reads, in one-letter code: MNLSNLQPAEGSTHNQNKRLGRGEGSGKGGTSARGHKGAKSRSGYSKKIGFEGGQMPLQRRVPKFGFTNINRIEYQGVNLDNLQLLVDNGIVTDTVDMAVFITSRLATKTEVVKILGRGELKAKLKVSAHKFTATAKAAIEAAGGEAIEL.

Positions 1–15 (MNLSNLQPAEGSTHN) are enriched in polar residues. Positions 1–52 (MNLSNLQPAEGSTHNQNKRLGRGEGSGKGGTSARGHKGAKSRSGYSKKIGFE) are disordered. Residues 23-32 (GEGSGKGGTS) show a composition bias toward gly residues.

This sequence belongs to the universal ribosomal protein uL15 family. In terms of assembly, part of the 50S ribosomal subunit.

Functionally, binds to the 23S rRNA. This is Large ribosomal subunit protein uL15 from Flavobacterium psychrophilum (strain ATCC 49511 / DSM 21280 / CIP 103535 / JIP02/86).